We begin with the raw amino-acid sequence, 542 residues long: CTP synthase (542 aa).

The interval 1–269 (MQTKYIFITG…DALICELLHL (269 aa)) is amidoligase domain. Position 14 (serine 14) interacts with CTP. Serine 14 is a binding site for UTP. ATP contacts are provided by residues 15-20 (SLGKGL) and aspartate 72. Residues aspartate 72 and glutamate 143 each coordinate Mg(2+). CTP-binding positions include 150-152 (DIE), 189-194 (KTKPSQ), and lysine 225. UTP is bound by residues 189–194 (KTKPSQ) and lysine 225. Position 241-243 (241-243 (KDV)) interacts with ATP. A Glutamine amidotransferase type-1 domain is found at 301-538 (YVQHQDAYKS…IQAMIIYHKS (238 aa)). Glycine 358 contributes to the L-glutamine binding site. Cysteine 385 functions as the Nucleophile; for glutamine hydrolysis in the catalytic mechanism. Residues 386-389 (LGMQ), glutamate 409, and arginine 466 each bind L-glutamine. Catalysis depends on residues histidine 511 and glutamate 513.

It belongs to the CTP synthase family. As to quaternary structure, homotetramer.

The enzyme catalyses UTP + L-glutamine + ATP + H2O = CTP + L-glutamate + ADP + phosphate + 2 H(+). The catalysed reaction is L-glutamine + H2O = L-glutamate + NH4(+). It catalyses the reaction UTP + NH4(+) + ATP = CTP + ADP + phosphate + 2 H(+). It functions in the pathway pyrimidine metabolism; CTP biosynthesis via de novo pathway; CTP from UDP: step 2/2. With respect to regulation, allosterically activated by GTP, when glutamine is the substrate; GTP has no effect on the reaction when ammonia is the substrate. The allosteric effector GTP functions by stabilizing the protein conformation that binds the tetrahedral intermediate(s) formed during glutamine hydrolysis. Inhibited by the product CTP, via allosteric rather than competitive inhibition. Functionally, catalyzes the ATP-dependent amination of UTP to CTP with either L-glutamine or ammonia as the source of nitrogen. Regulates intracellular CTP levels through interactions with the four ribonucleotide triphosphates. This chain is CTP synthase, found in Protochlamydia amoebophila (strain UWE25).